The following is a 461-amino-acid chain: Protein-serine O-palmitoleoyltransferase porcupine (461 aa).

The Cytoplasmic portion of the chain corresponds to 1 to 17 (MATFSRQEFFQQLLQGC). The chain crosses the membrane as a helical span at residues 18–38 (LLPTAQQGLDQIWLLLAICLA). At 39–66 (CRLLWRLGLPSYLKHASTVAGGFFSLYH) the chain is on the extracellular side. A helical membrane pass occupies residues 67–87 (FFQLHMVWVVLLSLLCYLVLF). Topologically, residues 88–95 (LCRHSSHR) are cytoplasmic. Residues 96 to 116 (GVFLSVTILIYLLMGEMHMVD) traverse the membrane as a helical segment. At 117 to 152 (TVTWHKMRGAQMIVAMKAVSLGFDLDRGEVGTVPSP) the chain is on the extracellular side. A helical membrane pass occupies residues 153–173 (VEFMGYLYFVGTIVFGPWISF). The Cytoplasmic portion of the chain corresponds to 174-198 (HSYLQAVQGRPLSCRWLQKVARSLA). Cys-187 carries the S-palmitoyl cysteine lipid modification. Residues 199 to 219 (LALLCLVLSTCVGPYLFPYFI) form a helical membrane-spanning segment. Residues 220 to 252 (PLNGDRLLRNKKRKARGTMVRWLRAYESAVSFH) are Extracellular-facing. The chain crosses the membrane as a helical span at residues 253–273 (FSNYFVGFLSEATATLAGAGF). Residues 274 to 337 (TEEKDHLEWD…SAVLVTYAAS (64 aa)) are Cytoplasmic-facing. The chain crosses the membrane as a helical span at residues 338-358 (ALLHGFSFHLAAVLLSLAFIT). His-341 is an active-site residue. Topologically, residues 359 to 396 (YVEHVLRKRLARILSACVLSKRCPPDCSHQHRLGLGVR) are extracellular. A helical transmembrane segment spans residues 397–417 (ALNLLFGALAIFHLAYLGSLF). Over 418–461 (DVDVDDTTEEQGYGMAYTVHKWSELSWASHWVTFGCWIFYRLIG) the chain is Cytoplasmic.

It belongs to the membrane-bound acyltransferase family. Porcupine subfamily. As to quaternary structure, interacts with WNT1, WNT3, WNT3A, WNT4, WNT5A, WNT5B, WNT6, WNT7A and WNT7B. As to expression, isoform 1 is expressed in fetal brain, brain, amygdala, caudate nucleus, cerebellum, hippocampus, pituitary, thalamus, heart, skeletal muscle and testis. Isoform 4 is expressed in amygdala, corpus callosum, hippocampus, spinal cord, kidney, liver, lung, spleen, uterus, testis. Isoform 2 and isoform 3 are expressed in substantia negra, spinal cord, heart and lung.

It is found in the endoplasmic reticulum membrane. It catalyses the reaction [Wnt protein]-L-serine + (9Z)-hexadecenoyl-CoA = [Wnt protein]-O-(9Z)-hexadecenoyl-L-serine + CoA. In terms of biological role, protein-serine O-palmitoleoyltransferase that acts as a key regulator of the Wnt signaling pathway by mediating the attachment of palmitoleate, a 16-carbon monounsaturated fatty acid (C16:1(9Z)), to Wnt proteins. Serine palmitoleoylation of WNT proteins is required for efficient binding to frizzled receptors. This Homo sapiens (Human) protein is Protein-serine O-palmitoleoyltransferase porcupine.